A 187-amino-acid polypeptide reads, in one-letter code: Peptidyl-tRNA hydrolase (187 aa).

Tyrosine 18 is a tRNA binding site. Catalysis depends on histidine 23, which acts as the Proton acceptor. Residues phenylalanine 65, asparagine 67, and asparagine 113 each contribute to the tRNA site.

The protein belongs to the PTH family. Monomer.

The protein resides in the cytoplasm. It catalyses the reaction an N-acyl-L-alpha-aminoacyl-tRNA + H2O = an N-acyl-L-amino acid + a tRNA + H(+). In terms of biological role, hydrolyzes ribosome-free peptidyl-tRNAs (with 1 or more amino acids incorporated), which drop off the ribosome during protein synthesis, or as a result of ribosome stalling. Catalyzes the release of premature peptidyl moieties from peptidyl-tRNA molecules trapped in stalled 50S ribosomal subunits, and thus maintains levels of free tRNAs and 50S ribosomes. This Coxiella burnetii (strain CbuG_Q212) (Coxiella burnetii (strain Q212)) protein is Peptidyl-tRNA hydrolase.